The primary structure comprises 139 residues: General odorant-binding protein 56a (139 aa).

A signal peptide spans 1–19 (MNSYFVIALSALFVTLAVG). A glycan (N-linked (GlcNAc...) asparagine) is linked at Asn23. Intrachain disulfides connect Cys39-Cys71, Cys67-Cys118, and Cys109-Cys127.

It belongs to the PBP/GOBP family. Expressed in ventral pits of larvae. In adults, it is not specifically expressed in chemosensory organs. Also expressed in stalk cells at the proximal tip of the wing disk.

The protein resides in the secreted. Present in the aqueous fluid surrounding olfactory sensory dendrites and are thought to aid in the capture and transport of hydrophobic odorants into and through this fluid. The chain is General odorant-binding protein 56a (Obp56a) from Drosophila melanogaster (Fruit fly).